A 276-amino-acid polypeptide reads, in one-letter code: Octanoyltransferase LipM (276 aa).

The region spanning 32–247 (GALPPVIRFY…GFEKGLDIKL (216 aa)) is the BPL/LPL catalytic domain. Residue Cys-149 is the Acyl-thioester intermediate of the active site.

This sequence belongs to the octanoyltransferase LipM family. Monomer.

It catalyses the reaction octanoyl-[ACP] + L-lysyl-[protein] = N(6)-octanoyl-L-lysyl-[protein] + holo-[ACP] + H(+). It participates in protein modification; protein lipoylation via endogenous pathway; protein N(6)-(lipoyl)lysine from octanoyl-[acyl-carrier-protein]. Its function is as follows. Catalyzes the transfer of endogenously produced octanoic acid from octanoyl-acyl-carrier-protein onto the lipoyl domain of GcvH, an intermediate carrier during protein lipoylation. This Macrococcus caseolyticus (strain JCSC5402) (Macrococcoides caseolyticum) protein is Octanoyltransferase LipM.